Reading from the N-terminus, the 747-residue chain is Cysteine--tRNA ligase, cytoplasmic (747 aa).

The interval methionine 1–glutamine 25 is disordered. Over residues proline 15–glutamine 25 the composition is skewed to polar residues. Residue cysteine 54 participates in Zn(2+) binding. An L-cysteine-binding site is contributed by glycine 55. The 'HIGH' region signature appears at proline 56–histidine 66. Threonine 95 contributes to the L-cysteine binding site. A 'KIIK' region motif is present at residues lysine 100–lysine 103. Zn(2+)-binding residues include cysteine 347, histidine 372, and glutamate 376. Histidine 372 contacts L-cysteine. The short motif at lysine 405–serine 409 is the 'KMSKS' region element. Residue lysine 408 coordinates ATP. The span at glutamate 651–lysine 683 shows a compositional bias: basic and acidic residues. A disordered region spans residues glutamate 651–lysine 722.

The protein belongs to the class-I aminoacyl-tRNA synthetase family. Homodimer. Zn(2+) serves as cofactor.

It is found in the cytoplasm. It carries out the reaction tRNA(Cys) + L-cysteine + ATP = L-cysteinyl-tRNA(Cys) + AMP + diphosphate. Functionally, catalyzes the ATP-dependent ligation of cysteine to tRNA(Cys). The sequence is that of Cysteine--tRNA ligase, cytoplasmic (cars1) from Xenopus tropicalis (Western clawed frog).